The sequence spans 1240 residues: Serine/threonine-protein kinase TAO2 (1240 aa).

A Phosphoserine modification is found at S9. Positions 28–281 (FSDLREIGHG…SEVLLKHRFV (254 aa)) constitute a Protein kinase domain. Residues 34-42 (IGHGSFGAV) and K57 each bind ATP. D151 functions as the Proton acceptor in the catalytic mechanism. Position 181 is a phosphoserine (S181). The interval 320 to 463 (APNGPGAEAP…PTSTSSSARR (144 aa)) is disordered. Residues 356–380 (SSHSVPSMSISASSQSSSVNSLADA) are compositionally biased toward low complexity. Acidic residues predominate over residues 381-401 (SDNEEEEEEEEEEEEEEEEEG). Residues 402 to 417 (PESREMAMMQEGEHTV) are compositionally biased toward basic and acidic residues. At S422 the chain carries Phosphoserine. 2 coiled-coil regions span residues 493–528 (SALR…EEHS) and 581–608 (KELA…LQEN). A Phosphoserine modification is found at S663. The stretch at 688–720 (LRQHEATRELELRQLQAVQRTRAELTRLQHQTE) forms a coiled coil. Phosphoserine occurs at positions 782, 830, and 832. The stretch at 805 to 934 (RILGKEGTTL…GDGCPSPDIP (130 aa)) forms a coiled coil. The disordered stretch occupies residues 899–946 (VLTPVPEEEEEEEEEGGAPIGTHRDPGDGCPSPDIPPEPPPSHLRQYP). Residues 904–914 (PEEEEEEEEEG) show a composition bias toward acidic residues. Over residues 931-940 (PDIPPEPPPS) the composition is skewed to pro residues. 5 consecutive transmembrane segments (helical) span residues 972–992 (LLPL…GGGL), 994–1014 (AALL…LFLC), 1019–1039 (LPPG…VLSL), 1045–1065 (LMGV…SLAL), and 1175–1195 (LASC…LLKG). At L999 the chain carries Omega-N-methylarginine. A Phosphoserine modification is found at L1037. Positions 1212 to 1240 (LGLSASRQLPPGTVAGRRSQTRRTLPPWR) are disordered.

Belongs to the protein kinase superfamily. STE Ser/Thr protein kinase family. STE20 subfamily. Interacts with MAP2K3 and MAP2K6. Self-associates. Interacts with tubulins. Interacts with MAP3K7 and interferes with MAP3K7-binding to CHUK and thus prevents NF-kappa-B activation. Isoform 2 interacts with PCDH8; this complex may also include CDH2. Requires Mg(2+) as cofactor. Post-translationally, autophosphorylated. Phosphorylated by ATM. Phosphorylated on Ser-1037 by MAPK14. This phosphorylation is required PCDH8 for endocytosis.

Its subcellular location is the cytoplasmic vesicle membrane. The protein localises to the cytoplasm. It is found in the cytoskeleton. It localises to the cell projection. The protein resides in the dendrite. The enzyme catalyses L-seryl-[protein] + ATP = O-phospho-L-seryl-[protein] + ADP + H(+). It catalyses the reaction L-threonyl-[protein] + ATP = O-phospho-L-threonyl-[protein] + ADP + H(+). In terms of biological role, serine/threonine-protein kinase involved in different processes such as membrane blebbing and apoptotic bodies formation DNA damage response and MAPK14/p38 MAPK stress-activated MAPK cascade. Phosphorylates itself, MBP, activated MAPK8, MAP2K3, MAP2K6 and tubulins. Activates the MAPK14/p38 MAPK signaling pathway through the specific activation and phosphorylation of the upstream MAP2K3 and MAP2K6 kinases. In response to DNA damage, involved in the G2/M transition DNA damage checkpoint by activating the p38/MAPK14 stress-activated MAPK cascade, probably by mediating phosphorylation of upstream MAP2K3 and MAP2K6 kinases. May affect microtubule organization and stability. May play a role in the osmotic stress-MAPK8 pathway. Prevents MAP3K7-mediated activation of CHUK, and thus NF-kappa-B activation. Isoform 2, but not isoform 1, is required for PCDH8 endocytosis. Following homophilic interactions between PCDH8 extracellular domains, isoform 2 phosphorylates and activates MAPK14/p38 MAPK which in turn phosphorylates isoform 2. This process leads to PCDH8 endocytosis and CDH2 cointernalization. Both isoforms are involved in MAPK14/p38 MAPK activation. In Mus musculus (Mouse), this protein is Serine/threonine-protein kinase TAO2 (Taok2).